A 193-amino-acid chain; its full sequence is Thymidylate kinase (193 aa).

ATP is bound at residue 7-14; the sequence is GIDGCGKS.

Belongs to the thymidylate kinase family.

The catalysed reaction is dTMP + ATP = dTDP + ADP. Its function is as follows. Phosphorylation of dTMP to form dTDP in both de novo and salvage pathways of dTTP synthesis. The polypeptide is Thymidylate kinase (Coprothermobacter proteolyticus (strain ATCC 35245 / DSM 5265 / OCM 4 / BT)).